A 409-amino-acid polypeptide reads, in one-letter code: Protein naked cuticle homolog 2 (409 aa).

Gly-2 is lipidated: N-myristoyl glycine. Residues 109–144 form the EF-hand domain; the sequence is AEDNRQEWVFTLYDFDNSGKVTKEDMSSLMHTIYDV. Asp-122, Asp-124, Ser-126, Lys-128, and Asp-133 together coordinate Ca(2+). 4 disordered regions span residues 160-224, 243-315, 346-366, and 388-409; these read LRVK…YCVD, TSRF…RYPG, SHTHAHTPSGLQHSHSRRIRS, and RHEHHHHHEHHHHHHYHHYHQT. 2 stretches are compositionally biased toward basic and acidic residues: residues 171 to 185 and 193 to 224; these read AARRRDATHTERETS and VRSEEHRSADRRQSTHIRGQTEAHEGNHYCVD. The span at 247–268 shows a compositional bias: low complexity; it reads DSSSPDADQDPPSRSSHSQSRP. The span at 389-409 shows a compositional bias: basic residues; sequence HEHHHHHEHHHHHHYHHYHQT.

It belongs to the NKD family. Expressed ubiquitously until 1 dpf, when expression becomes confined to the anterior CNS, with slight expression in the developing tail.

It is found in the cell membrane. The protein localises to the cytoplasm. Cell autonomous antagonist of both the canonical and non-canonical Wnt signaling pathways. This is Protein naked cuticle homolog 2 (nkd2) from Danio rerio (Zebrafish).